Consider the following 263-residue polypeptide: Glutamate racemase (263 aa).

Residues 10–11 and 42–43 contribute to the substrate site; these read DS and YG. The Proton donor/acceptor role is filled by C73. 74-75 contacts substrate; it reads NS. The active-site Proton donor/acceptor is the C183. A substrate-binding site is contributed by 184 to 185; it reads TH.

It belongs to the aspartate/glutamate racemases family.

The enzyme catalyses L-glutamate = D-glutamate. Its pathway is cell wall biogenesis; peptidoglycan biosynthesis. In terms of biological role, provides the (R)-glutamate required for cell wall biosynthesis. The sequence is that of Glutamate racemase from Acidothermus cellulolyticus (strain ATCC 43068 / DSM 8971 / 11B).